Here is a 362-residue protein sequence, read N- to C-terminus: Protein RecA (362 aa).

77–84 (GPESSGKT) contacts ATP.

This sequence belongs to the RecA family.

It localises to the cytoplasm. In terms of biological role, can catalyze the hydrolysis of ATP in the presence of single-stranded DNA, the ATP-dependent uptake of single-stranded DNA by duplex DNA, and the ATP-dependent hybridization of homologous single-stranded DNAs. It interacts with LexA causing its activation and leading to its autocatalytic cleavage. This Rhizobium etli (strain CIAT 652) protein is Protein RecA.